A 355-amino-acid chain; its full sequence is Alanine racemase (355 aa).

Lys-37 acts as the Proton acceptor; specific for D-alanine in catalysis. An N6-(pyridoxal phosphate)lysine modification is found at Lys-37. Residue Arg-129 coordinates substrate. Tyr-251 acts as the Proton acceptor; specific for L-alanine in catalysis. Met-299 is a binding site for substrate.

This sequence belongs to the alanine racemase family. Pyridoxal 5'-phosphate is required as a cofactor.

The enzyme catalyses L-alanine = D-alanine. Its pathway is amino-acid biosynthesis; D-alanine biosynthesis; D-alanine from L-alanine: step 1/1. Functionally, catalyzes the interconversion of L-alanine and D-alanine. May also act on other amino acids. This is Alanine racemase (alr) from Deinococcus geothermalis (strain DSM 11300 / CIP 105573 / AG-3a).